A 443-amino-acid chain; its full sequence is tRNA modification GTPase MnmE (443 aa).

(6S)-5-formyl-5,6,7,8-tetrahydrofolate contacts are provided by Arg23, Glu82, and Lys121. The region spanning Gly215–Gln364 is the TrmE-type G domain. Asn225 lines the K(+) pocket. GTP contacts are provided by residues Asn225–Ser230, Thr244–Thr250, and Asp269–Gly272. Ser229 serves as a coordination point for Mg(2+). K(+) contacts are provided by Thr244, Ile246, and Thr249. Thr250 lines the Mg(2+) pocket. Lys443 is a (6S)-5-formyl-5,6,7,8-tetrahydrofolate binding site.

It belongs to the TRAFAC class TrmE-Era-EngA-EngB-Septin-like GTPase superfamily. TrmE GTPase family. In terms of assembly, homodimer. Heterotetramer of two MnmE and two MnmG subunits. Requires K(+) as cofactor.

The protein resides in the cytoplasm. Its function is as follows. Exhibits a very high intrinsic GTPase hydrolysis rate. Involved in the addition of a carboxymethylaminomethyl (cmnm) group at the wobble position (U34) of certain tRNAs, forming tRNA-cmnm(5)s(2)U34. The chain is tRNA modification GTPase MnmE from Chlamydia abortus (strain DSM 27085 / S26/3) (Chlamydophila abortus).